Here is a 125-residue protein sequence, read N- to C-terminus: Small ribosomal subunit protein uS13 (125 aa).

Positions 97–125 (PVRGQKTRSNARTRKGPRPSRIKTKKKSS) are disordered. Residues 101-125 (QKTRSNARTRKGPRPSRIKTKKKSS) are compositionally biased toward basic residues.

This sequence belongs to the universal ribosomal protein uS13 family. Part of the 30S ribosomal subunit. Forms a loose heterodimer with protein S19. Forms two bridges to the 50S subunit in the 70S ribosome.

In terms of biological role, located at the top of the head of the 30S subunit, it contacts several helices of the 16S rRNA. In the 70S ribosome it contacts the 23S rRNA (bridge B1a) and protein L5 of the 50S subunit (bridge B1b), connecting the 2 subunits; these bridges are implicated in subunit movement. Contacts the tRNAs in the A and P-sites. The polypeptide is Small ribosomal subunit protein uS13 (Thermotoga maritima (strain ATCC 43589 / DSM 3109 / JCM 10099 / NBRC 100826 / MSB8)).